A 148-amino-acid chain; its full sequence is Large ribosomal subunit protein bL9 (148 aa).

It belongs to the bacterial ribosomal protein bL9 family.

In terms of biological role, binds to the 23S rRNA. In Hahella chejuensis (strain KCTC 2396), this protein is Large ribosomal subunit protein bL9.